The chain runs to 266 residues: Putative carbamate hydrolase RutD (266 aa).

Belongs to the AB hydrolase superfamily. Hydrolase RutD family.

The enzyme catalyses carbamate + 2 H(+) = NH4(+) + CO2. Functionally, involved in pyrimidine catabolism. May facilitate the hydrolysis of carbamate, a reaction that can also occur spontaneously. The polypeptide is Putative carbamate hydrolase RutD (Escherichia coli O157:H7).